A 296-amino-acid chain; its full sequence is MSHPVMHTDFPGLKLLARGKVRDIYDLGETLLLVTSDRISAFDVIMNEPIPDKGFVLTEISSFWFRQMEDIVSNHIISTDVDEFPAACRPHADLLRGRSMLVKKARPLPVECIVRGYVSGSGWKEYQSSGSICGISLPPGLRESDRLPEPIFTPSTKAELGTHDENISFERMTELCGRELAEQARDYTLKIYGRARELADQKGIIIADTKFEFGVFEGELIIIDECMTPDSSRFWLKDDYRPGGPQPSFDKQFLRDYLEGLDWNKTAPAPALPAEIIAKTAQMYREALSRITGISL.

Belongs to the SAICAR synthetase family.

The catalysed reaction is 5-amino-1-(5-phospho-D-ribosyl)imidazole-4-carboxylate + L-aspartate + ATP = (2S)-2-[5-amino-1-(5-phospho-beta-D-ribosyl)imidazole-4-carboxamido]succinate + ADP + phosphate + 2 H(+). It functions in the pathway purine metabolism; IMP biosynthesis via de novo pathway; 5-amino-1-(5-phospho-D-ribosyl)imidazole-4-carboxamide from 5-amino-1-(5-phospho-D-ribosyl)imidazole-4-carboxylate: step 1/2. In Pelobacter propionicus (strain DSM 2379 / NBRC 103807 / OttBd1), this protein is Phosphoribosylaminoimidazole-succinocarboxamide synthase.